Here is a 264-residue protein sequence, read N- to C-terminus: Glutamate racemase (264 aa).

Residues 10-11 (DS) and 42-43 (YG) each bind substrate. Cys-73 functions as the Proton donor/acceptor in the catalytic mechanism. 74-75 (NT) is a binding site for substrate. The active-site Proton donor/acceptor is Cys-181. Substrate is bound at residue 182–183 (TH).

Belongs to the aspartate/glutamate racemases family.

It carries out the reaction L-glutamate = D-glutamate. It functions in the pathway cell wall biogenesis; peptidoglycan biosynthesis. Its function is as follows. Provides the (R)-glutamate required for cell wall biosynthesis. This Thermoanaerobacter pseudethanolicus (strain ATCC 33223 / 39E) (Clostridium thermohydrosulfuricum) protein is Glutamate racemase.